A 254-amino-acid polypeptide reads, in one-letter code: HTH-type transcriptional regulator GolR (254 aa).

The 56-residue stretch at 3–58 (PFERQNKIIHLLDQNNKITVPELSRILDVSISTIRNDLSALEESGMIKKVHGGAVL) folds into the HTH deoR-type domain. The H-T-H motif DNA-binding region spans 20-39 (ITVPELSRILDVSISTIRND).

Its function is as follows. Involved in the glycerol metabolism. Repressor of the gol operon for glycerol metabolism. The sequence is that of HTH-type transcriptional regulator GolR from Listeria innocua serovar 6a (strain ATCC BAA-680 / CLIP 11262).